The following is a 407-amino-acid chain: Argininosuccinate synthase (407 aa).

ATP contacts are provided by residues 13-21 (AYSGGLDTS) and alanine 40. The L-citrulline site is built by tyrosine 91 and serine 96. Residue glycine 121 participates in ATP binding. L-aspartate-binding residues include threonine 123, asparagine 127, and aspartate 128. Asparagine 127 is a binding site for L-citrulline. Arginine 131, serine 182, serine 191, glutamate 267, and tyrosine 279 together coordinate L-citrulline.

This sequence belongs to the argininosuccinate synthase family. Type 1 subfamily. In terms of assembly, homotetramer.

The protein localises to the cytoplasm. The enzyme catalyses L-citrulline + L-aspartate + ATP = 2-(N(omega)-L-arginino)succinate + AMP + diphosphate + H(+). It functions in the pathway amino-acid biosynthesis; L-arginine biosynthesis; L-arginine from L-ornithine and carbamoyl phosphate: step 2/3. The sequence is that of Argininosuccinate synthase from Agrobacterium fabrum (strain C58 / ATCC 33970) (Agrobacterium tumefaciens (strain C58)).